The sequence spans 133 residues: Protein U17 (133 aa).

A helical membrane pass occupies residues 82–102 (FVSVLWCVILVFVVKIKLFFL).

It is found in the membrane. This chain is Protein U17 (U17/U16), found in Homo sapiens (Human).